The following is an 86-amino-acid chain: Co-chaperonin GroES (86 aa).

It belongs to the GroES chaperonin family. Heptamer of 7 subunits arranged in a ring. Interacts with the chaperonin GroEL.

The protein resides in the cytoplasm. Functionally, together with the chaperonin GroEL, plays an essential role in assisting protein folding. The GroEL-GroES system forms a nano-cage that allows encapsulation of the non-native substrate proteins and provides a physical environment optimized to promote and accelerate protein folding. GroES binds to the apical surface of the GroEL ring, thereby capping the opening of the GroEL channel. The protein is Co-chaperonin GroES of Campylobacter concisus (strain 13826).